The following is a 1066-amino-acid chain: TBC1 domain family member 31 (1066 aa).

7 WD repeats span residues 33–74 (HNTS…LHGN), 75–116 (RFNL…TVTK), 117–157 (ELVS…LDTF), 158–200 (QRKR…CDTL), 201–248 (FCKY…ARQL), 249–296 (FRII…MQTC), and 297–334 (KLLF…NIYS). Positions 424–599 (EYPTKYRMFI…KLFDNIFSNH (176 aa)) constitute a Rab-GAP TBC domain. 2 coiled-coil regions span residues 728–861 (QKQE…DLEE) and 914–948 (NKCY…KWKE). The segment covering 989 to 998 (CHKEEPRFQN) has biased composition (basic and acidic residues). The segment at 989–1020 (CHKEEPRFQNEQDSSCLPRTSQLNDSSEMDPS) is disordered. The segment covering 999 to 1020 (EQDSSCLPRTSQLNDSSEMDPS) has biased composition (polar residues). The tract at residues 1053–1056 (RARH) is mediates direct interaction with PJA2.

As to quaternary structure, interacts with PJA2; the interaction is direct and recruits PJA2 to centrosomes. Interacts with OFD1; regulates its activity in cilium assembly. Interacts with PRKACA.

The protein resides in the cytoplasm. It is found in the cytoskeleton. It localises to the microtubule organizing center. Its subcellular location is the centrosome. The protein localises to the centriolar satellite. The protein resides in the cilium basal body. Functionally, molecular adapter which is involved in cilium biogenesis. Part of a functional complex including OFD1 a centriolar protein involved in cilium assembly. Could regulate the cAMP-dependent phosphorylation of OFD1, and its subsequent ubiquitination by PJA2 which ultimately leads to its proteasomal degradation. The protein is TBC1 domain family member 31 of Homo sapiens (Human).